We begin with the raw amino-acid sequence, 503 residues long: Aspartyl/glutamyl-tRNA(Asn/Gln) amidotransferase subunit B (503 aa).

Belongs to the GatB/GatE family. GatB subfamily. As to quaternary structure, heterotrimer of A, B and C subunits.

It carries out the reaction L-glutamyl-tRNA(Gln) + L-glutamine + ATP + H2O = L-glutaminyl-tRNA(Gln) + L-glutamate + ADP + phosphate + H(+). It catalyses the reaction L-aspartyl-tRNA(Asn) + L-glutamine + ATP + H2O = L-asparaginyl-tRNA(Asn) + L-glutamate + ADP + phosphate + 2 H(+). Functionally, allows the formation of correctly charged Asn-tRNA(Asn) or Gln-tRNA(Gln) through the transamidation of misacylated Asp-tRNA(Asn) or Glu-tRNA(Gln) in organisms which lack either or both of asparaginyl-tRNA or glutaminyl-tRNA synthetases. The reaction takes place in the presence of glutamine and ATP through an activated phospho-Asp-tRNA(Asn) or phospho-Glu-tRNA(Gln). This chain is Aspartyl/glutamyl-tRNA(Asn/Gln) amidotransferase subunit B, found in Mycolicibacterium smegmatis (strain ATCC 700084 / mc(2)155) (Mycobacterium smegmatis).